The chain runs to 348 residues: UDP-3-O-acylglucosamine N-acyltransferase (348 aa).

Catalysis depends on His-237, which acts as the Proton acceptor.

Belongs to the transferase hexapeptide repeat family. LpxD subfamily. Homotrimer.

The catalysed reaction is a UDP-3-O-[(3R)-3-hydroxyacyl]-alpha-D-glucosamine + a (3R)-hydroxyacyl-[ACP] = a UDP-2-N,3-O-bis[(3R)-3-hydroxyacyl]-alpha-D-glucosamine + holo-[ACP] + H(+). The protein operates within bacterial outer membrane biogenesis; LPS lipid A biosynthesis. Functionally, catalyzes the N-acylation of UDP-3-O-acylglucosamine using 3-hydroxyacyl-ACP as the acyl donor. Is involved in the biosynthesis of lipid A, a phosphorylated glycolipid that anchors the lipopolysaccharide to the outer membrane of the cell. This Geotalea daltonii (strain DSM 22248 / JCM 15807 / FRC-32) (Geobacter daltonii) protein is UDP-3-O-acylglucosamine N-acyltransferase.